Here is a 278-residue protein sequence, read N- to C-terminus: 4-hydroxy-tetrahydrodipicolinate reductase (278 aa).

Residues 13 to 18 (GAAGKM) and 111 to 113 (GTT) each bind NAD(+). The active-site Proton donor/acceptor is the His-167. His-168 is a (S)-2,3,4,5-tetrahydrodipicolinate binding site. Catalysis depends on Lys-171, which acts as the Proton donor. 177-178 (GT) is a (S)-2,3,4,5-tetrahydrodipicolinate binding site.

It belongs to the DapB family.

The protein resides in the cytoplasm. It carries out the reaction (S)-2,3,4,5-tetrahydrodipicolinate + NAD(+) + H2O = (2S,4S)-4-hydroxy-2,3,4,5-tetrahydrodipicolinate + NADH + H(+). It catalyses the reaction (S)-2,3,4,5-tetrahydrodipicolinate + NADP(+) + H2O = (2S,4S)-4-hydroxy-2,3,4,5-tetrahydrodipicolinate + NADPH + H(+). Its pathway is amino-acid biosynthesis; L-lysine biosynthesis via DAP pathway; (S)-tetrahydrodipicolinate from L-aspartate: step 4/4. In terms of biological role, catalyzes the conversion of 4-hydroxy-tetrahydrodipicolinate (HTPA) to tetrahydrodipicolinate. In Nostoc sp. (strain PCC 7120 / SAG 25.82 / UTEX 2576), this protein is 4-hydroxy-tetrahydrodipicolinate reductase.